Here is a 202-residue protein sequence, read N- to C-terminus: Holliday junction branch migration complex subunit RuvA (202 aa).

The segment at 1-64 (MISRLRGTVL…EDAFDLFGFL (64 aa)) is domain I. Residues 65–143 (TKGEEEVFLL…TIHLEAVSRG (79 aa)) form a domain II region. The segment at 143 to 147 (GTAPA) is flexible linker. The tract at residues 148–202 (AVSGAHADLVSALLNLGYKQPQAEKAADLASERLGAEATFQALFREALKALRSGG) is domain III.

Belongs to the RuvA family. As to quaternary structure, homotetramer. Forms an RuvA(8)-RuvB(12)-Holliday junction (HJ) complex. HJ DNA is sandwiched between 2 RuvA tetramers; dsDNA enters through RuvA and exits via RuvB. An RuvB hexamer assembles on each DNA strand where it exits the tetramer. Each RuvB hexamer is contacted by two RuvA subunits (via domain III) on 2 adjacent RuvB subunits; this complex drives branch migration. In the full resolvosome a probable DNA-RuvA(4)-RuvB(12)-RuvC(2) complex forms which resolves the HJ.

The protein localises to the cytoplasm. Its function is as follows. The RuvA-RuvB-RuvC complex processes Holliday junction (HJ) DNA during genetic recombination and DNA repair, while the RuvA-RuvB complex plays an important role in the rescue of blocked DNA replication forks via replication fork reversal (RFR). RuvA specifically binds to HJ cruciform DNA, conferring on it an open structure. The RuvB hexamer acts as an ATP-dependent pump, pulling dsDNA into and through the RuvAB complex. HJ branch migration allows RuvC to scan DNA until it finds its consensus sequence, where it cleaves and resolves the cruciform DNA. The protein is Holliday junction branch migration complex subunit RuvA of Myxococcus xanthus (strain DK1622).